A 131-amino-acid polypeptide reads, in one-letter code: D-ribose pyranase (131 aa).

Residue His20 is the Proton donor of the active site. Residues Asp28, His98, and 120–122 contribute to the substrate site; that span reads YAN.

This sequence belongs to the RbsD / FucU family. RbsD subfamily. Homodecamer.

The protein localises to the cytoplasm. The catalysed reaction is beta-D-ribopyranose = beta-D-ribofuranose. It participates in carbohydrate metabolism; D-ribose degradation; D-ribose 5-phosphate from beta-D-ribopyranose: step 1/2. Functionally, catalyzes the interconversion of beta-pyran and beta-furan forms of D-ribose. This Bacillus licheniformis (strain ATCC 14580 / DSM 13 / JCM 2505 / CCUG 7422 / NBRC 12200 / NCIMB 9375 / NCTC 10341 / NRRL NRS-1264 / Gibson 46) protein is D-ribose pyranase.